A 245-amino-acid chain; its full sequence is DNA polymerase sliding clamp (245 aa).

Belongs to the PCNA family. Homotrimer. The subunits circularize to form a toroid; DNA passes through its center. Replication factor C (RFC) is required to load the toroid on the DNA.

Functionally, sliding clamp subunit that acts as a moving platform for DNA processing. Responsible for tethering the catalytic subunit of DNA polymerase and other proteins to DNA during high-speed replication. In Archaeoglobus fulgidus (strain ATCC 49558 / DSM 4304 / JCM 9628 / NBRC 100126 / VC-16), this protein is DNA polymerase sliding clamp.